A 224-amino-acid polypeptide reads, in one-letter code: Cytochrome c biogenesis ATP-binding export protein CcmA (224 aa).

The region spanning 1 to 220 (MQNAEAAPAL…EYAHAEVVGA (220 aa)) is the ABC transporter domain. 40–47 (GANGSGKT) provides a ligand contact to ATP.

The protein belongs to the ABC transporter superfamily. CcmA exporter (TC 3.A.1.107) family. In terms of assembly, the complex is composed of two ATP-binding proteins (CcmA) and two transmembrane proteins (CcmB).

It localises to the cell inner membrane. It catalyses the reaction heme b(in) + ATP + H2O = heme b(out) + ADP + phosphate + H(+). Its function is as follows. Part of the ABC transporter complex CcmAB involved in the biogenesis of c-type cytochromes; once thought to export heme, this seems not to be the case, but its exact role is uncertain. Responsible for energy coupling to the transport system. The protein is Cytochrome c biogenesis ATP-binding export protein CcmA of Bordetella bronchiseptica (strain ATCC BAA-588 / NCTC 13252 / RB50) (Alcaligenes bronchisepticus).